The primary structure comprises 173 residues: RTX-III toxin-activating lysine-acyltransferase ApxIIC (173 aa).

Active-site residues include H29 and D98.

It belongs to the RTX toxin acyltransferase family. As to quaternary structure, homodimer.

It is found in the cytoplasm. It carries out the reaction a fatty acyl-[ACP] + L-lysyl-[protein] = N(6)-(fatty acyl)-L-lysyl-[protein] + holo-[ACP] + H(+). Its function is as follows. Protein-lysine acyltransferase that catalyzes fatty acylation of the protoxin, thereby converting it to the active toxin. The protein is RTX-III toxin-activating lysine-acyltransferase ApxIIC (apxIIIC) of Actinobacillus pleuropneumoniae (Haemophilus pleuropneumoniae).